The following is a 74-amino-acid chain: Antimicrobial peptide ToAp1 (74 aa).

A signal peptide spans 1–22; the sequence is MQMKYLIPIFFLVLIVADHCHA. At Lys39 the chain carries Lysine amide. Positions 40 to 74 are excised as a propeptide; the sequence is GRRKRDITAQIEQYRNIQKREAAELEELLANLPVY.

The protein belongs to the non-disulfide-bridged peptide (NDBP) superfamily. Short antimicrobial peptide (group 4) family. In terms of tissue distribution, expressed by the venom gland.

The protein localises to the secreted. In terms of biological role, antimicrobial peptide. Is able to kill Mycobacterium abscessus subsp. massiliense in a dose-dependent manner. Has antifungal activity against Candida spp. and one Cryptococcus neoformans strains with MICs values ranging from 12.5 to 200 uM. Also shows an inhibitory activity on C.albicans biofilms at high concentrations. Shows low cytotoxic activity and has weak hemolytic activity on human erythrocytes. Shows anti-inflammatory activities, since it decreases release of pro-inflammatory cytokines, and increases release of anti-inflammatory cytokines. Acts by blocking the Toll-like receptor 4 (TLR4). In addition, decreases the expression of costimulatory molecules such as CD80 and CD86 in LPS-stimulated cells. In vivo, does not induce immune cell migration. Helical wheel projections predict an amphipathic peptide with distinct hydrophobic and hydrophilic faces. The polypeptide is Antimicrobial peptide ToAp1 (Tityus obscurus (Amazonian scorpion)).